We begin with the raw amino-acid sequence, 286 residues long: ATP synthase gamma chain (286 aa).

This sequence belongs to the ATPase gamma chain family. In terms of assembly, F-type ATPases have 2 components, CF(1) - the catalytic core - and CF(0) - the membrane proton channel. CF(1) has five subunits: alpha(3), beta(3), gamma(1), delta(1), epsilon(1). CF(0) has three main subunits: a, b and c.

It localises to the cell inner membrane. Its function is as follows. Produces ATP from ADP in the presence of a proton gradient across the membrane. The gamma chain is believed to be important in regulating ATPase activity and the flow of protons through the CF(0) complex. This is ATP synthase gamma chain from Shewanella sp. (strain ANA-3).